The sequence spans 115 residues: Con-Ins G1a (115 aa).

The first 24 residues, 1–24 (MTTSSYFLLMALGLLLYVCQSSFG), serve as a signal peptide directing secretion. Positions 25-29 (NQHTR) are excised as a propeptide. Position 34 is a 4-hydroxyproline; partial (proline 34). 3 disulfide bridges follow: cysteine 38-cysteine 101, cysteine 50-cysteine 114, and cysteine 100-cysteine 105. Glutamate 41 carries the post-translational modification 4-carboxyglutamate. A propeptide spans 53–94 (KRNDAGEKRGRASPLWQRRGSLSKLKARAKRNGAFHLPRDGR) (c peptide). The residue at position 98 (glutamate 98) is a 4-carboxyglutamate. A 4-hydroxyproline; partial modification is found at proline 104. The residue at position 109 (glutamate 109) is a 4-carboxyglutamate; partial. A Cysteine amide modification is found at cysteine 114.

This sequence belongs to the insulin family. In terms of assembly, heterodimer of A and B chains; disulfide-linked. In terms of tissue distribution, expressed by the venom gland.

The protein resides in the secreted. Functionally, this venom insulin, from a fish-hunting cone snail, facilitates prey capture by rapidly inducing hypoglycemic shock. It is one of the smallest known insulin found in nature and lacks the C-terminal segment of the B chain that, in human insulin, mediates engagement of the insulin receptor (INSR) and assembly of the hormone's hexameric storage form. Despite lacking this segment, it both binds and activates human insulin receptor (long isoform (HIR-B)) with a high potency (EC(50)=16.28 nM). In vivo, intraperitoneal injection of this peptide into zebrafish lowers blood glucose with the same potency than human insulin. In addition, when applied to water, this peptide reduces overall locomotor activity of zebrafish larvae, observed as a significant decrease in the percentage of time spent swimming and movement frequency. When tested on a mouse model of diabetes, this insulin also lowers blood glucose with a 10-fold lower potency than human insulin. This is Con-Ins G1a from Conus geographus (Geography cone).